The primary structure comprises 410 residues: Lissencephaly-1 homolog (410 aa).

Residues 7 to 39 (QRDELNRAIADYLRSNGYEEAYSVFKKEAELDM) form the LisH domain. The stretch at 56–82 (TSVIRLQKKVMELESKLNEAKEEFTSG) forms a coiled coil. WD repeat units lie at residues 106–147 (GHRS…RTLK), 148–187 (GHTDSVQDISFDHSGKLLASCSADMTIKLWDFQGFECIRT), 190–229 (GHDHNVSSVAIMPNGDHIVSASRDKTIKMWEVQTGYCVKT), 232–271 (GHREWVRMVRPNQDGTLIASCSNDQTVRVWVVATKECKAE), 274–333 (EHEH…CLMT), 336–377 (GHDN…KTLN), and 379–410 (HEHFVTSLDFHKTAPYVVTGSVDQTVKVWECR).

This sequence belongs to the WD repeat LIS1/nudF family. In terms of assembly, can self-associate. Component of the cytosolic PAF-AH (I) heterotetrameric enzyme, which is composed of PAFAH1B1 (beta), PAFAH1B2 (alpha2) and PAFAH1B3 (alpha1) subunits. The catalytic activity of the enzyme resides in the alpha1 (PAFAH1B3) and alpha2 (PAFAH1B2) subunits, whereas the beta subunit (PAFAH1B1) has regulatory activity. Trimer formation is not essential for the catalytic activity. Interacts with dynein, dynactin, nde1 and ndel1.

Its subcellular location is the cytoplasm. It localises to the cytoskeleton. The protein localises to the microtubule organizing center. The protein resides in the centrosome. In terms of biological role, regulatory subunit (beta subunit) of the cytosolic type I platelet-activating factor (PAF) acetylhydrolase (PAF-AH (I)), an enzyme that catalyzes the hydrolyze of the acetyl group at the sn-2 position of PAF and its analogs and participates in the PAF inactivation. Positively regulates the activity of the minus-end directed microtubule motor protein dynein. May enhance dynein-mediated microtubule sliding by targeting dynein to the microtubule plus end. Required for several dynein- and microtubule-dependent processes such as the maintenance of Golgi integrity, the peripheral transport of microtubule fragments and the coupling of the nucleus and centrosome. May be required for proliferation of neuronal precursors and neuronal migration. This is Lissencephaly-1 homolog (pafah1b1) from Xenopus tropicalis (Western clawed frog).